Consider the following 216-residue polypeptide: MRRKNVILVIFFLIFFIGFEFSDMTLAFINLPSSYTYYVTSFDKKLPKNVTLIIPTCSLNGDIAEIKPLREGNISLLDTQYGKMIKIEAEEVGHITITSFISSEKTIDIINENITLSPILERELLSKTENKKELSMVYRVKIPVYAEFEGNSTIYVTLHVESGFKALPFFFTFTIPWEPRYGWKPYAGHKYLEVKITKKGWQLAEGEERVRLIFAV.

The helical transmembrane segment at Ile-7–Ile-29 threads the bilayer.

It localises to the membrane. This is an uncharacterized protein from Archaeoglobus fulgidus (strain ATCC 49558 / DSM 4304 / JCM 9628 / NBRC 100126 / VC-16).